The chain runs to 284 residues: 4-diphosphocytidyl-2-C-methyl-D-erythritol kinase (284 aa).

The active site involves lysine 14. Position 97–107 (97–107 (PMGGGVGGGSS)) interacts with ATP. Aspartate 139 is an active-site residue.

It belongs to the GHMP kinase family. IspE subfamily.

The catalysed reaction is 4-CDP-2-C-methyl-D-erythritol + ATP = 4-CDP-2-C-methyl-D-erythritol 2-phosphate + ADP + H(+). It participates in isoprenoid biosynthesis; isopentenyl diphosphate biosynthesis via DXP pathway; isopentenyl diphosphate from 1-deoxy-D-xylulose 5-phosphate: step 3/6. Its function is as follows. Catalyzes the phosphorylation of the position 2 hydroxy group of 4-diphosphocytidyl-2C-methyl-D-erythritol. The polypeptide is 4-diphosphocytidyl-2-C-methyl-D-erythritol kinase (Pseudoalteromonas translucida (strain TAC 125)).